Consider the following 785-residue polypeptide: Hyperosmolality-gated Ca2+ permeable channel 1.7 (785 aa).

A helical membrane pass occupies residues 7–27 (IGLSAAINLLSAFAFLFAFAM). Residue Ser54 is modified to Phosphoserine. 9 helical membrane-spanning segments follow: residues 101-121 (IYLLGLKMFVPITLLAFGVLV), 156-176 (FWAHITMTYVITFWTCYILYM), 373-393 (LLTTVALFFLIFCFMIPIAFV), 425-445 (FLPGIALKIFLIILPTILMTM), 465-485 (YFWFIIVNVFLGSIITGTAFQ), 510-530 (ATFFITYIMVDGWAGIAAEIL), 582-602 (AVAPILLPFIIVFFAFAYVVF), 628-648 (LIICLIISQLLMMGLLSTKKF), and 651-671 (VTALLLPQPILTFWFYRYCAG). A disordered region spans residues 725-761 (VDEEESNPLVRTKRTSQGTTRYNSEASSSATTTPVAN). The segment covering 739–761 (TSQGTTRYNSEASSSATTTPVAN) has biased composition (polar residues).

It belongs to the CSC1 (TC 1.A.17) family. In terms of processing, phosphorylated and activated by BIK1.

The protein localises to the membrane. The enzyme catalyses Ca(2+)(in) = Ca(2+)(out). In terms of biological role, calcium-permeable channel involved in plant stomatal immunity. This chain is Hyperosmolality-gated Ca2+ permeable channel 1.7, found in Arabidopsis thaliana (Mouse-ear cress).